A 310-amino-acid chain; its full sequence is Mitochondrial 2-oxodicarboxylate carrier 1 (310 aa).

Helical transmembrane passes span 9-29, 78-97, 126-146, 179-199, 219-239, and 281-301; these read LPFI…LLVM, SHLY…KRAI, IYSG…FELV, GLEA…GIIF, LIAG…FDVV, and MRLA…MDFF. Solcar repeat units follow at residues 9–108, 120–204, and 213–300; these read LPFI…FQTF, MTQK…IRKL, and EKTR…VMDF.

This sequence belongs to the mitochondrial carrier (TC 2.A.29) family.

The protein localises to the mitochondrion inner membrane. In terms of biological role, transports C5-C7 oxodicarboxylates across the inner membranes of mitochondria. Can transport 2-oxoadipate, 2-oxoglutarate, adipate, glutarate, 2-oxopimelate, oxaloacetate, citrate and malate. The main physiological role is probably to supply 2-oxoadipate and 2-oxoglutarate from the mitochondrial matrix to the cytosol where they are used in the biosynthesis of lysine and glutamate, respectively, and in lysine catabolism. In Saccharomyces cerevisiae (strain ATCC 204508 / S288c) (Baker's yeast), this protein is Mitochondrial 2-oxodicarboxylate carrier 1 (ODC1).